A 112-amino-acid polypeptide reads, in one-letter code: ATP synthase epsilon chain (112 aa).

This sequence belongs to the ATPase epsilon chain family. As to quaternary structure, F-type ATPases have 2 components, CF(1) - the catalytic core - and CF(0) - the membrane proton channel. CF(1) has five subunits: alpha(3), beta(3), gamma(1), delta(1), epsilon(1). CF(0) has three main subunits: a, b and c.

The protein localises to the cell inner membrane. In terms of biological role, produces ATP from ADP in the presence of a proton gradient across the membrane. The chain is ATP synthase epsilon chain from Rickettsia felis (strain ATCC VR-1525 / URRWXCal2) (Rickettsia azadi).